The following is a 239-amino-acid chain: Glutathione S-transferase verG (239 aa).

Residues 18-101 (KPLIFVMEGR…YLSNKYDAKR (84 aa)) form the GST N-terminal domain. In terms of domain architecture, GST C-terminal spans 107 to 237 (NAAENLEICN…ELDSRKEIAI (131 aa)).

The protein belongs to the GST superfamily.

The catalysed reaction is RX + glutathione = an S-substituted glutathione + a halide anion + H(+). The protein operates within mycotoxin biosynthesis. Glutathione S-transferase; part of the gene cluster that mediates the biosynthesis of 11'-deoxyverticillin A, one of the dimeric epipolythiodioxopiperazines (ETPs) from the verticillin family that act as mycotoxins. 11'-deoxyverticillin A is required for normal conidiation. The nonribosomal peptide synthetase verP is speculated to be responsible for condensation of amino acids to form the carbon skeleton of verticillin, whereas the cluster-specific tailoring enzymes are involved in further modifications leading to the production of 11'-deoxyverticillin A. The sequence is that of Glutathione S-transferase verG from Clonostachys rogersoniana.